The following is a 329-amino-acid chain: Tryptophan--tRNA ligase (329 aa).

Residues Gln-9 to Ser-11 and Gly-17 to Asn-18 each bind ATP. The 'HIGH' region motif lies at Pro-10–Asn-18. Asp-133 provides a ligand contact to L-tryptophan. ATP contacts are provided by residues Gly-145–Asp-147, Val-184, and Lys-193–Ser-197. The 'KMSKS' region signature appears at Lys-193–Ser-197.

The protein belongs to the class-I aminoacyl-tRNA synthetase family. Homodimer.

Its subcellular location is the cytoplasm. The catalysed reaction is tRNA(Trp) + L-tryptophan + ATP = L-tryptophyl-tRNA(Trp) + AMP + diphosphate + H(+). Catalyzes the attachment of tryptophan to tRNA(Trp). The protein is Tryptophan--tRNA ligase of Staphylococcus aureus (strain MRSA252).